Here is a 648-residue protein sequence, read N- to C-terminus: 1-deoxy-D-xylulose-5-phosphate synthase (648 aa).

Thiamine diphosphate is bound by residues His73 and 114 to 116 (SHA). Asp145 lines the Mg(2+) pocket. Residues 146–147 (GA), Asn175, Tyr286, and Glu367 each bind thiamine diphosphate. Residue Asn175 coordinates Mg(2+).

Belongs to the transketolase family. DXPS subfamily. Homodimer. Requires Mg(2+) as cofactor. Thiamine diphosphate is required as a cofactor.

It carries out the reaction D-glyceraldehyde 3-phosphate + pyruvate + H(+) = 1-deoxy-D-xylulose 5-phosphate + CO2. The protein operates within metabolic intermediate biosynthesis; 1-deoxy-D-xylulose 5-phosphate biosynthesis; 1-deoxy-D-xylulose 5-phosphate from D-glyceraldehyde 3-phosphate and pyruvate: step 1/1. Catalyzes the acyloin condensation reaction between C atoms 2 and 3 of pyruvate and glyceraldehyde 3-phosphate to yield 1-deoxy-D-xylulose-5-phosphate (DXP). This Rhodococcus erythropolis (strain PR4 / NBRC 100887) protein is 1-deoxy-D-xylulose-5-phosphate synthase.